A 130-amino-acid chain; its full sequence is Small ribosomal subunit protein uS11c (130 aa).

This sequence belongs to the universal ribosomal protein uS11 family. In terms of assembly, part of the 30S ribosomal subunit.

It localises to the plastid. It is found in the chloroplast. In Nephroselmis olivacea (Green alga), this protein is Small ribosomal subunit protein uS11c.